Here is a 308-residue protein sequence, read N- to C-terminus: Ribosomal RNA small subunit methyltransferase H (308 aa).

S-adenosyl-L-methionine contacts are provided by residues 46 to 48, Asp-63, Tyr-87, Asp-108, and Gln-115; that span reads AGH. Positions 269-308 are disordered; that stretch reads TKRPVEASEEERGRNPRARSAKLRAAEKVAAPEGLPEVEV. Residues 271 to 282 are compositionally biased toward basic and acidic residues; that stretch reads RPVEASEEERGR.

This sequence belongs to the methyltransferase superfamily. RsmH family.

It is found in the cytoplasm. The enzyme catalyses cytidine(1402) in 16S rRNA + S-adenosyl-L-methionine = N(4)-methylcytidine(1402) in 16S rRNA + S-adenosyl-L-homocysteine + H(+). Specifically methylates the N4 position of cytidine in position 1402 (C1402) of 16S rRNA. In Deinococcus geothermalis (strain DSM 11300 / CIP 105573 / AG-3a), this protein is Ribosomal RNA small subunit methyltransferase H.